A 442-amino-acid polypeptide reads, in one-letter code: ATP-dependent RNA helicase SUB2 (442 aa).

Residues 59–87 (TGFRDFLLKGELLRAITDCGFEHPSEVQQ) carry the Q motif motif. Residues 90 to 265 (IPTAILNVDV…KKFMRNPLEV (176 aa)) enclose the Helicase ATP-binding domain. ATP is bound at residue 103 to 110 (AKSGLGKT). Positions 212 to 215 (DECD) match the DECD box motif. Residues 293-438 (KLNELLDSLE…EYPQGGVDSS (146 aa)) enclose the Helicase C-terminal domain.

It belongs to the DEAD box helicase family. DECD subfamily.

It is found in the nucleus. It catalyses the reaction ATP + H2O = ADP + phosphate + H(+). Functionally, ATP-binding RNA helicase involved in transcription elongation and required for the export of mRNA out of the nucleus. SUB2 also plays a role in pre-mRNA splicing and spliceosome assembly. May be involved in rDNA and telomeric silencing, and maintenance of genome integrity. The chain is ATP-dependent RNA helicase SUB2 (SUB2) from Ajellomyces capsulatus (strain NAm1 / WU24) (Darling's disease fungus).